Here is a 304-residue protein sequence, read N- to C-terminus: Small ribosomal subunit protein uS2 (304 aa).

The residue at position 2 (Ser-2) is an N-acetylserine. Laminin-binding stretches follow at residues 161 to 180 (IPCN…MLAR) and 205 to 229 (RDPE…EFQG). [DE]-W-[ST] repeat units follow at residues 230–232 (EWS), 245–247 (DWS), 275–277 (DWS), 284–286 (DWS), and 302–304 (DWS). Positions 242–304 (EVADWSEGVA…DWGGATSDWS (63 aa)) are laminin-binding. Residues 257 to 304 (IQQFPAGTPAPAPAVKTEDWSTQPATEDWSTAPTAQASDWGGATSDWS) form a disordered region. Residues 276 to 293 (WSTQPATEDWSTAPTAQA) show a composition bias toward polar residues.

It belongs to the universal ribosomal protein uS2 family. In terms of assembly, monomer (37LRP) and homodimer (67LR). Component of the small ribosomal subunit. Mature ribosomes consist of a small (40S) and a large (60S) subunit. The 40S subunit contains about 33 different proteins and 1 molecule of RNA (18S). The 60S subunit contains about 49 different proteins and 3 molecules of RNA (28S, 5.8S and 5S). Interacts with rps21. Interacts with several laminins including at least lamb1. Interacts with mdk. Post-translationally, acylated. Acylation may be a prerequisite for conversion of the monomeric 37 kDa laminin receptor precursor (37LRP) to the mature dimeric 67 kDa laminin receptor (67LR), and may provide a mechanism for membrane association. In terms of processing, cleaved by stromelysin-3 (ST3) at the cell surface. Cleavage by stromelysin-3 may be a mechanism to alter cell-extracellular matrix interactions.

Its subcellular location is the cell membrane. It is found in the cytoplasm. The protein resides in the nucleus. Its function is as follows. Required for the assembly and/or stability of the 40S ribosomal subunit. Required for the processing of the 20S rRNA-precursor to mature 18S rRNA in a late step of the maturation of 40S ribosomal subunits. Also functions as a cell surface receptor for laminin. Plays a role in cell adhesion to the basement membrane and in the consequent activation of signaling transduction pathways. May play a role in cell fate determination and tissue morphogenesis. The protein is Small ribosomal subunit protein uS2 (rpsa) of Sparus aurata (Gilthead sea bream).